A 520-amino-acid chain; its full sequence is Cyclin-L2 (520 aa).

A2 is modified (N-acetylalanine). Cyclin-like regions lie at residues 83-185 and 198-282; these read ELIQ…RVLK and KIIV…KILQ. Residues 316 to 520 form a disordered region; that stretch reads LPGGTQVLDG…DHPGHSRHRR (205 aa). 4 positions are modified to phosphoserine: S330, S338, S348, and S351. Residues 357–367 show a composition bias toward basic and acidic residues; sequence RRLEGAKKAKA. At S369 the chain carries Phosphoserine. Residues 376–390 are compositionally biased toward basic and acidic residues; it reads KGRESRSRSRSREQS. Residues 385–423 are RS; it reads RSREQSYSRSPSRSASPKRRKSDSGSTSGGSKSQSRSRS. The span at 408–436 shows a compositional bias: low complexity; that stretch reads SGSTSGGSKSQSRSRSRSDSPPRQAPRSA. Basic and acidic residues predominate over residues 441–454; the sequence is SEIRGSRKSKDCKY. Positions 456-471 are enriched in basic residues; sequence QKPHKSRSRSSSRSRS. Basic and acidic residues-rich tracts occupy residues 472–481 and 489–514; these read RSRERADNPG and YYRDQRRERSRSYERTGRRYERDHPG.

Belongs to the cyclin family. Cyclin L subfamily. Interacts with CDK11A, CDK11B, CDK12, CDK13 and POLR2A, the hyperphosphorylated C-terminal domain (CTD) of RNA polymerase II. May form a ternary complex with CDK11B and casein kinase II (CKII). Interacts with pre-mRNA-splicing factors, including at least SRSF1, SRSF2 AND SRSF7/SLU7. As to expression, widely expressed.

It is found in the nucleus speckle. The protein resides in the nucleus. It localises to the nucleoplasm. Functionally, involved in pre-mRNA splicing. May induce cell death, possibly by acting on the transcription and RNA processing of apoptosis-related factors. In Homo sapiens (Human), this protein is Cyclin-L2 (CCNL2).